Consider the following 277-residue polypeptide: Large ribosomal subunit protein uL2 (277 aa).

Residues 219–277 (TVRGSVMNPNDHPHGGGEGKAPVGRKAPSTPWGKPALGLKTRNKKAKSNKLIVRRRNEK) are disordered. The span at 259–277 (TRNKKAKSNKLIVRRRNEK) shows a compositional bias: basic residues.

Belongs to the universal ribosomal protein uL2 family. As to quaternary structure, part of the 50S ribosomal subunit. Forms a bridge to the 30S subunit in the 70S ribosome.

One of the primary rRNA binding proteins. Required for association of the 30S and 50S subunits to form the 70S ribosome, for tRNA binding and peptide bond formation. It has been suggested to have peptidyltransferase activity; this is somewhat controversial. Makes several contacts with the 16S rRNA in the 70S ribosome. In Streptococcus equi subsp. zooepidemicus (strain MGCS10565), this protein is Large ribosomal subunit protein uL2.